Consider the following 427-residue polypeptide: MKVTVGRSGVHGEIFAPASKSYTHRAITVAALSKESIIHRPLISADTQSTIKACEMLGAYIEKDGDKLLISGVDGEPQTPDNVIDVGNSGTTLRFMTAIAALGQGTTVLTGDNSIRSRPNGPLLQVLNDLGVQSISTRGDGCAPIVVTGGLKGAIAKIDGSISSQFISALLLACPLTKNSTTLSIKGELKSRPYVDVTLDILEKAGAEIYLEDNQNLKFIIPGNQKYRLKEYTVPGDFSSASYLLAAAAMTDTKIKVNNLYPSMQGDAAIIDILKEMGANIYWNKEEGTVEVNGGKLHGITMDAGATPDLVPTVAVLGAVAEGETVITNAEHVRYKETDRLHAMAVELDKMGISTSEEKDKLTIKGGELKGADVHGWHDHRIVMSLTLAGMIAGDTTIDTAEAIFISYPNFFDSMRSIGADVILSEQ.

3-phosphoshikimate contacts are provided by K20, S21, and R25. Position 20 (K20) interacts with phosphoenolpyruvate. Phosphoenolpyruvate-binding residues include G90 and R118. Residues S163, S164, Q165, S191, D309, and K336 each contribute to the 3-phosphoshikimate site. Q165 serves as a coordination point for phosphoenolpyruvate. The active-site Proton acceptor is D309. 2 residues coordinate phosphoenolpyruvate: R340 and R381.

Belongs to the EPSP synthase family. As to quaternary structure, monomer.

The protein localises to the cytoplasm. The enzyme catalyses 3-phosphoshikimate + phosphoenolpyruvate = 5-O-(1-carboxyvinyl)-3-phosphoshikimate + phosphate. The protein operates within metabolic intermediate biosynthesis; chorismate biosynthesis. In terms of biological role, catalyzes the transfer of the enolpyruvyl moiety of phosphoenolpyruvate (PEP) to the 5-hydroxyl of shikimate-3-phosphate (S3P) to produce enolpyruvyl shikimate-3-phosphate and inorganic phosphate. The protein is 3-phosphoshikimate 1-carboxyvinyltransferase of Methanococcoides burtonii (strain DSM 6242 / NBRC 107633 / OCM 468 / ACE-M).